Consider the following 153-residue polypeptide: Large ribosomal subunit protein bL27m (153 aa).

The N-terminal 37 residues, 1–37 (MINQGLFIRVNNFQLLKASLAYKKASNILTFPPIRTS), are a transit peptide targeting the mitochondrion. Residues 34–57 (IRTSTKHGGGSSKNTGDSAGRRLG) are disordered.

It belongs to the bacterial ribosomal protein bL27 family. As to quaternary structure, component of the mitochondrial large ribosomal subunit (mt-LSU). Mature yeast 74S mitochondrial ribosomes consist of a small (37S) and a large (54S) subunit. The 37S small subunit contains a 15S ribosomal RNA (15S mt-rRNA) and at least 32 different proteins. The 54S large subunit contains a 21S rRNA (21S mt-rRNA) and at least 45 different proteins.

It localises to the mitochondrion. Functionally, component of the mitochondrial ribosome (mitoribosome), a dedicated translation machinery responsible for the synthesis of mitochondrial genome-encoded proteins, including at least some of the essential transmembrane subunits of the mitochondrial respiratory chain. The mitoribosomes are attached to the mitochondrial inner membrane and translation products are cotranslationally integrated into the membrane. The sequence is that of Large ribosomal subunit protein bL27m (mrp7) from Schizosaccharomyces pombe (strain 972 / ATCC 24843) (Fission yeast).